Consider the following 325-residue polypeptide: Helicase VP6-A (325 aa).

Disordered regions lie at residues Met1–Arg127 and Glu174–Arg230. 4 stretches are compositionally biased toward basic and acidic residues: residues Val8–Gln18, Glu32–Glu54, Gly61–Ile79, and Pro92–Gly105. ATP is bound at residue Lys106. Residues Lys106–Gly122 are compositionally biased toward gly residues. Positions Gly175–Ala229 are enriched in basic and acidic residues.

This sequence belongs to the orbivirus VP6 family. In terms of assembly, homohexamer.

Its subcellular location is the virion. It catalyses the reaction ATP + H2O = ADP + phosphate + H(+). ATP dependent RNA helicase essential for RNA packaging and viral transcription. Possesses ss- and dsRNA-binding capacity. The chain is Helicase VP6-A (Segment-9) from Bluetongue virus 13 (isolate USA) (BTV 13).